A 260-amino-acid polypeptide reads, in one-letter code: uncharacterized protein (260 aa).

This is an uncharacterized protein from Saccharomyces cerevisiae (strain ATCC 204508 / S288c) (Baker's yeast).